A 618-amino-acid polypeptide reads, in one-letter code: Proline--tRNA ligase (618 aa).

Belongs to the class-II aminoacyl-tRNA synthetase family. ProS type 1 subfamily. As to quaternary structure, homodimer.

Its subcellular location is the cytoplasm. The catalysed reaction is tRNA(Pro) + L-proline + ATP = L-prolyl-tRNA(Pro) + AMP + diphosphate. In terms of biological role, catalyzes the attachment of proline to tRNA(Pro) in a two-step reaction: proline is first activated by ATP to form Pro-AMP and then transferred to the acceptor end of tRNA(Pro). As ProRS can inadvertently accommodate and process non-cognate amino acids such as alanine and cysteine, to avoid such errors it has two additional distinct editing activities against alanine. One activity is designated as 'pretransfer' editing and involves the tRNA(Pro)-independent hydrolysis of activated Ala-AMP. The other activity is designated 'posttransfer' editing and involves deacylation of mischarged Ala-tRNA(Pro). The misacylated Cys-tRNA(Pro) is not edited by ProRS. This is Proline--tRNA ligase from Streptococcus pyogenes serotype M2 (strain MGAS10270).